The sequence spans 256 residues: Thioredoxin-dependent peroxide reductase, mitochondrial (256 aa).

A mitochondrion-targeting transit peptide spans 1–61 (MAAAVGRLLR…KLFSTSSSCH (61 aa)). The Thioredoxin domain maps to 63 to 221 (PAVTQHAPYF…TLRLVKAFQY (159 aa)). N6-succinyllysine is present on Lys-83. Residue Lys-91 is modified to N6-acetyllysine; alternate. Lys-91 is modified (N6-succinyllysine; alternate). Catalysis depends on Cys-108, which acts as the Cysteine sulfenic acid (-SOH) intermediate. Thr-146 carries the post-translational modification Phosphothreonine.

This sequence belongs to the peroxiredoxin family. AhpC/Prx1 subfamily. As to quaternary structure, homodimer; disulfide-linked, upon oxidation. 6 homodimers assemble to form a ring-like dodecamer. Interacts with NEK6. Interacts with LRRK2. Interacts with MAP3K13. Interacts with RPS6KC1 (via PX domain). Post-translationally, phosphorylated by LRRK2; phosphorylation reduces perodixase activity. In terms of processing, the enzyme can be inactivated by further oxidation of the cysteine sulfenic acid (C(P)-SOH) to sulphinic acid (C(P)-SO2H) and sulphonic acid (C(P)-SO3H) instead of its condensation to a disulfide bond. S-palmitoylated.

It is found in the mitochondrion. The protein localises to the cytoplasm. It localises to the early endosome. It catalyses the reaction a hydroperoxide + [thioredoxin]-dithiol = an alcohol + [thioredoxin]-disulfide + H2O. Functionally, thiol-specific peroxidase that catalyzes the reduction of hydrogen peroxide and organic hydroperoxides to water and alcohols, respectively. Plays a role in cell protection against oxidative stress by detoxifying peroxides. Acts synergistically with MAP3K13 to regulate the activation of NF-kappa-B in the cytosol. Required for the maintenance of physical strength. This Homo sapiens (Human) protein is Thioredoxin-dependent peroxide reductase, mitochondrial (PRDX3).